The chain runs to 652 residues: DNA ligase (652 aa).

Residues 29-33 (DSEYD), 78-79 (SL), and Glu107 each bind NAD(+). Lys109 acts as the N6-AMP-lysine intermediate in catalysis. The NAD(+) site is built by Arg130, Glu164, Lys278, and Lys302. Residues Cys395, Cys398, Cys413, and Cys418 each coordinate Zn(2+). One can recognise a BRCT domain in the interval 577 to 652 (VADAALSGLT…VRDEAWLESL (76 aa)).

The protein belongs to the NAD-dependent DNA ligase family. LigA subfamily. Mg(2+) is required as a cofactor. The cofactor is Mn(2+).

The catalysed reaction is NAD(+) + (deoxyribonucleotide)n-3'-hydroxyl + 5'-phospho-(deoxyribonucleotide)m = (deoxyribonucleotide)n+m + AMP + beta-nicotinamide D-nucleotide.. DNA ligase that catalyzes the formation of phosphodiester linkages between 5'-phosphoryl and 3'-hydroxyl groups in double-stranded DNA using NAD as a coenzyme and as the energy source for the reaction. It is essential for DNA replication and repair of damaged DNA. The protein is DNA ligase of Streptococcus pneumoniae serotype 2 (strain D39 / NCTC 7466).